The sequence spans 299 residues: Ethylmalonyl-CoA decarboxylase (299 aa).

The protein belongs to the enoyl-CoA hydratase/isomerase family.

It is found in the cytoplasm. Its subcellular location is the cytosol. It catalyses the reaction (2S)-ethylmalonyl-CoA + H(+) = butanoyl-CoA + CO2. The enzyme catalyses (S)-methylmalonyl-CoA + H(+) = propanoyl-CoA + CO2. It carries out the reaction (2R)-ethylmalonyl-CoA + H(+) = butanoyl-CoA + CO2. Its function is as follows. Decarboxylates ethylmalonyl-CoA, a potentially toxic metabolite, to form butyryl-CoA, suggesting it might be involved in metabolite proofreading. Acts preferentially on (S)-ethylmalonyl-CoA but also has some activity on the (R)-isomer. Also has methylmalonyl-CoA decarboxylase activity at lower level. The polypeptide is Ethylmalonyl-CoA decarboxylase (echdc1) (Xenopus tropicalis (Western clawed frog)).